The primary structure comprises 469 residues: UDP-N-acetylmuramate--L-alanine ligase (469 aa).

120 to 126 (GTHGKTT) is a binding site for ATP.

The protein belongs to the MurCDEF family.

The protein localises to the cytoplasm. It carries out the reaction UDP-N-acetyl-alpha-D-muramate + L-alanine + ATP = UDP-N-acetyl-alpha-D-muramoyl-L-alanine + ADP + phosphate + H(+). The protein operates within cell wall biogenesis; peptidoglycan biosynthesis. Functionally, cell wall formation. This is UDP-N-acetylmuramate--L-alanine ligase from Acetivibrio thermocellus (strain ATCC 27405 / DSM 1237 / JCM 9322 / NBRC 103400 / NCIMB 10682 / NRRL B-4536 / VPI 7372) (Clostridium thermocellum).